Consider the following 112-residue polypeptide: Cuticle protein AM1239 (112 aa).

The Chitin-binding type R&amp;R domain maps to 16 to 85 (DGNFNYRFET…FIPTDHPLPA (70 aa)). An O-linked (HexNAc) threonine glycan is attached at Thr79.

In terms of tissue distribution, arthrodial membrane.

The chain is Cuticle protein AM1239 from Cancer pagurus (Rock crab).